The sequence spans 306 residues: Recombination-associated protein RdgC (306 aa).

Belongs to the RdgC family.

The protein localises to the cytoplasm. It localises to the nucleoid. May be involved in recombination. The protein is Recombination-associated protein RdgC of Pseudomonas aeruginosa (strain LESB58).